A 437-amino-acid chain; its full sequence is Glycogen synthase (437 aa).

Lys15 contacts ADP-alpha-D-glucose.

This sequence belongs to the glycosyltransferase 1 family. Bacterial/plant glycogen synthase subfamily.

It catalyses the reaction [(1-&gt;4)-alpha-D-glucosyl](n) + ADP-alpha-D-glucose = [(1-&gt;4)-alpha-D-glucosyl](n+1) + ADP + H(+). It participates in glycan biosynthesis; glycogen biosynthesis. Synthesizes alpha-1,4-glucan chains using ADP-glucose. This is Glycogen synthase from Thermus thermophilus (strain ATCC 27634 / DSM 579 / HB8).